A 266-amino-acid polypeptide reads, in one-letter code: Potassium/proton antiporter CemA (266 aa).

The next 3 helical transmembrane spans lie at 46–66, 151–171, and 226–246; these read VIVS…INIL, FLSF…IIIL, and FMSL…KYWI.

The protein belongs to the CemA family.

Its subcellular location is the plastid. The protein localises to the chloroplast inner membrane. The enzyme catalyses K(+)(in) + H(+)(out) = K(+)(out) + H(+)(in). Its function is as follows. Contributes to K(+)/H(+) antiport activity by supporting proton efflux to control proton extrusion and homeostasis in chloroplasts in a light-dependent manner to modulate photosynthesis. Prevents excessive induction of non-photochemical quenching (NPQ) under continuous-light conditions. Indirectly promotes efficient inorganic carbon uptake into chloroplasts. This Chlorella vulgaris (Green alga) protein is Potassium/proton antiporter CemA.